Reading from the N-terminus, the 1274-residue chain is Paired amphipathic helix protein Sin3a (1274 aa).

Disordered stretches follow at residues 1 to 26 (MKRRLDDQESPVYAAQQRRIPGSTEA) and 85 to 110 (HHHPTAVQPHGGQVVQSHAHPAPPVA). S10 is subject to Phosphoserine. The region spanning 119 to 189 (QRLKVEDALS…MGFNTFLPPG (71 aa)) is the PAH 1 domain. Residues 119–196 (QRLKVEDALS…PPGYKIEVQT (78 aa)) form an interaction with HCFC1 region. Glycyl lysine isopeptide (Lys-Gly) (interchain with G-Cter in SUMO2) cross-links involve residues K122 and K134. A disordered region spans residues 205–297 (PGQVHQIPTH…ISLGTAPSLQ (93 aa)). Residues 205–479 (PGQVHQIPTH…KVRKALRSAE (275 aa)) form an interaction with REST region. A compositionally biased stretch (low complexity) spans 228–237 (SQPSSQSAPT). Polar residues predominate over residues 252 to 266 (KPSQLQAHTPASQQT). Pro residues predominate over residues 267-282 (PPLPPYASPRSPPVQP). Residue S277 is modified to Phosphoserine. T284 bears the Phosphothreonine mark. Residues 284-297 (TPVTISLGTAPSLQ) are compositionally biased toward polar residues. Residues 300 to 383 (QPVEFNHAIN…SEFGQFLPDA (84 aa)) form the PAH 2 domain. The tract at residues 398–443 (DSVRNDHGGTVKKPQLNNKPQRPSQNGCQIRRHSGTGATPPVKKKP) is disordered. Positions 412–425 (QLNNKPQRPSQNGC) are enriched in polar residues. The PAH 3 domain occupies 457–526 (SKHGVGTESL…NWFKNFLGYK (70 aa)). Positions 459 to 526 (HGVGTESLFF…NWFKNFLGYK (68 aa)) are interaction with SAP30. The residue at position 470 (K470) is an N6-acetyllysine. The segment at 524–851 (GYKESVHLES…EMDVDEATGA (328 aa)) is interaction with NCOR1. The interval 525–660 (YKESVHLESF…KFRLDNTLGG (136 aa)) is interactions with SUDS3 and SAP130. K564 participates in a covalent cross-link: Glycyl lysine isopeptide (Lys-Gly) (interchain with G-Cter in SUMO2). The interval 688–830 (NPSIAVPIVL…IPDLLFAQRG (143 aa)) is interactions with HDAC1 and ARID4B. S833 carries the phosphoserine modification. Residues 835 to 847 (VEEEEEEEMDVDE) show a composition bias toward acidic residues. The segment at 835 to 865 (VEEEEEEEMDVDEATGAPKKHNGVGGSPPKS) is disordered. S861 is subject to Phosphoserine. 2 positions are modified to N6-acetyllysine: K866 and K876. The interval 889 to 968 (VNNNWYIFMR…YYPAFLDMVR (80 aa)) is interaction with OGT. Residues 904 to 933 (CLRLLRICSQAERQIEEENREREWEREVLG) adopt a coiled-coil conformation. S941, S1090, and S1113 each carry phosphoserine. The interval 1137–1157 (CQRGREQQEKEGKEGNSKKTM) is disordered. Residues 1139–1157 (RGREQQEKEGKEGNSKKTM) are compositionally biased toward basic and acidic residues.

Interacts with ARID4B, BRMS1L, HCFC1, HDAC1, HDAC2, MXI1, SAP30L, SAP130, SFPQ and TOPORS. Interacts with OGT (via TPRs 1-6); the interaction mediates transcriptional repression in parallel with histone deacetylase. Interacts with BAZ2A, MXD1, MXD3, MXD4, MBD2, DACH1, NCOR1, NR4A2, REST, RLIM, SAP30, SETDB1, SMYD2, and SUDS3. Interacts with PHF12 in a complex composed of HDAC1, PHF12 and SAP30. Interacts with TET1; the interaction recruits SIN3A to gene promoters. The large PER complex involved in the histone deacetylation is composed of at least HDAC1, PER2, SFPQ and SIN3A. Interacts with KLF11. Interacts with PPHLN1. Found in a complex with YY1, GON4L and HDAC1. Interacts (via PAH2) with FOXK1. Interacts with FOXK2. Found in a complex composed of at least SINHCAF, SIN3A, HDAC1, SAP30, RBBP4, OGT and TET1. Interacts with SINHCAF. Interacts with SPHK2. SUMO1 sumoylated by TOPORS. Probably desumoylated by SENP2. In terms of tissue distribution, widely expressed. Highest levels in testis, lung and thymus. Expressed at relatively high levels throughout brain development. In adult mice, expression is high in neurogenic regions such as the subventricular zone, rostral migratory stream, olfactory bulb and dentate gyrus.

The protein localises to the nucleus. It localises to the nucleolus. Its function is as follows. Acts as a transcriptional repressor. Corepressor for REST. Interacts with MXI1 to repress MYC responsive genes and antagonize MYC oncogenic activities. Also interacts with MXD1-MAX heterodimers to repress transcription by tethering SIN3A to DNA. Acts cooperatively with OGT to repress transcription in parallel with histone deacetylation. Involved in the control of the circadian rhythms. Required for the transcriptional repression of circadian target genes, such as PER1, mediated by the large PER complex through histone deacetylation. Cooperates with FOXK1 to regulate cell cycle progression probably by repressing cell cycle inhibitor genes expression. Required for cortical neuron differentiation and callosal axon elongation. The polypeptide is Paired amphipathic helix protein Sin3a (Sin3a) (Mus musculus (Mouse)).